Reading from the N-terminus, the 385-residue chain is Lipoyl synthase, mitochondrial (385 aa).

The segment at 18–40 is disordered; that stretch reads TKAKNRTFSSSTVESSTKQPPQF. [4Fe-4S] cluster contacts are provided by cysteine 113, cysteine 118, cysteine 124, cysteine 144, cysteine 148, cysteine 151, and serine 360. The Radical SAM core domain occupies 129 to 349; it reads ETGTATATIM…KTLGMEMGFR (221 aa).

It belongs to the radical SAM superfamily. Lipoyl synthase family. [4Fe-4S] cluster is required as a cofactor.

The protein resides in the mitochondrion. The enzyme catalyses [[Fe-S] cluster scaffold protein carrying a second [4Fe-4S](2+) cluster] + N(6)-octanoyl-L-lysyl-[protein] + 2 oxidized [2Fe-2S]-[ferredoxin] + 2 S-adenosyl-L-methionine + 4 H(+) = [[Fe-S] cluster scaffold protein] + N(6)-[(R)-dihydrolipoyl]-L-lysyl-[protein] + 4 Fe(3+) + 2 hydrogen sulfide + 2 5'-deoxyadenosine + 2 L-methionine + 2 reduced [2Fe-2S]-[ferredoxin]. It participates in protein modification; protein lipoylation via endogenous pathway; protein N(6)-(lipoyl)lysine from octanoyl-[acyl-carrier-protein]: step 2/2. Its function is as follows. Catalyzes the radical-mediated insertion of two sulfur atoms into the C-6 and C-8 positions of the octanoyl moiety bound to the lipoyl domains of lipoate-dependent enzymes, thereby converting the octanoylated domains into lipoylated derivatives. The chain is Lipoyl synthase, mitochondrial from Populus trichocarpa (Western balsam poplar).